A 429-amino-acid polypeptide reads, in one-letter code: Mannose-6-phosphate isomerase (429 aa).

Residues Gln109, His111, Glu136, and His281 each contribute to the Zn(2+) site. Residue Arg300 is part of the active site.

The protein belongs to the mannose-6-phosphate isomerase type 1 family. The cofactor is Zn(2+).

It is found in the cytoplasm. The enzyme catalyses D-mannose 6-phosphate = D-fructose 6-phosphate. It functions in the pathway nucleotide-sugar biosynthesis; GDP-alpha-D-mannose biosynthesis; alpha-D-mannose 1-phosphate from D-fructose 6-phosphate: step 1/2. In terms of biological role, involved in the synthesis of the GDP-mannose and dolichol-phosphate-mannose required for a number of critical mannosyl transfer reactions. This Eremothecium gossypii (strain ATCC 10895 / CBS 109.51 / FGSC 9923 / NRRL Y-1056) (Yeast) protein is Mannose-6-phosphate isomerase (PMI1).